A 499-amino-acid chain; its full sequence is Chitinase B (499 aa).

Positions 1 to 41 (MSTRKAVIGYYFIPTNQINNYTETDTSVVPFPVSNITPAKA) are cleaved as a signal peptide. A GH18 domain is found at 42 to 425 (KQLTHINFSF…AALDRYFNAA (384 aa)). Residues 68 to 69 (DA) and 95 to 98 (GGWY) contribute to the chitin site. Glutamate 144 (proton donor) is an active-site residue. Chitin-binding positions include tyrosine 145, 212-215 (MTYD), and tryptophan 403. Residues 438–498 (LRYTGVGPGN…DSAWLKVGRL (61 aa)) form the Chitin-binding type-3 domain.

Belongs to the glycosyl hydrolase 18 family. Chitinase class II subfamily.

The enzyme catalyses Random endo-hydrolysis of N-acetyl-beta-D-glucosaminide (1-&gt;4)-beta-linkages in chitin and chitodextrins.. This chain is Chitinase B (chiB), found in Serratia marcescens.